The following is a 512-amino-acid chain: Cytochrome P450 26B1 (512 aa).

Cys-441 provides a ligand contact to heme.

Belongs to the cytochrome P450 family. Requires heme as cofactor. As to expression, highly expressed in brain, particularly in the cerebellum and pons.

It is found in the endoplasmic reticulum membrane. The protein resides in the microsome membrane. It carries out the reaction all-trans-retinoate + reduced [NADPH--hemoprotein reductase] + O2 = all-trans-4-hydroxyretinoate + oxidized [NADPH--hemoprotein reductase] + H2O + H(+). The catalysed reaction is all-trans-retinoate + reduced [NADPH--hemoprotein reductase] + O2 = all-trans-18-hydroxyretinoate + oxidized [NADPH--hemoprotein reductase] + H2O + H(+). Functionally, a cytochrome P450 monooxygenase involved in the metabolism of retinoates (RAs), the active metabolites of vitamin A, and critical signaling molecules in animals. RAs exist as at least four different isomers: all-trans-RA (atRA), 9-cis-RA, 13-cis-RA, and 9,13-dicis-RA, where atRA is considered to be the biologically active isomer, although 9-cis-RA and 13-cis-RA also have activity. Catalyzes the hydroxylation of atRA primarily at C-4 and C-18, thereby contributing to the regulation of atRA homeostasis and signaling. Hydroxylation of atRA limits its biological activity and initiates a degradative process leading to its eventual elimination. Involved in the convertion of atRA to all-trans-4-oxo-RA. Can oxidize all-trans-13,14-dihydroretinoate (DRA) to metabolites which could include all-trans-4-oxo-DRA, all-trans-4-hydroxy-DRA, all-trans-5,8-epoxy-DRA, and all-trans-18-hydroxy-DRA. Shows preference for the following substrates: atRA &gt; 9-cis-RA &gt; 13-cis-RA. Plays a central role in germ cell development: acts by degrading RAs in the developing testis, preventing STRA8 expression, thereby leading to delay of meiosis. Required for the maintenance of the undifferentiated state of male germ cells during embryonic development in Sertoli cells, inducing arrest in G0 phase of the cell cycle and preventing meiotic entry. Plays a role in skeletal development, both at the level of patterning and in the ossification of bone and the establishment of some synovial joints. Essential for postnatal survival. In terms of biological role, also has a significant activity in oxidation of tazarotenic acid and may therefore metabolize that xenobiotic in vivo. The chain is Cytochrome P450 26B1 (CYP26B1) from Homo sapiens (Human).